The sequence spans 256 residues: 3-deoxy-manno-octulosonate cytidylyltransferase (256 aa).

It belongs to the KdsB family.

The protein localises to the cytoplasm. The enzyme catalyses 3-deoxy-alpha-D-manno-oct-2-ulosonate + CTP = CMP-3-deoxy-beta-D-manno-octulosonate + diphosphate. The protein operates within nucleotide-sugar biosynthesis; CMP-3-deoxy-D-manno-octulosonate biosynthesis; CMP-3-deoxy-D-manno-octulosonate from 3-deoxy-D-manno-octulosonate and CTP: step 1/1. Its pathway is bacterial outer membrane biogenesis; lipopolysaccharide biosynthesis. Its function is as follows. Activates KDO (a required 8-carbon sugar) for incorporation into bacterial lipopolysaccharide in Gram-negative bacteria. The protein is 3-deoxy-manno-octulosonate cytidylyltransferase of Histophilus somni (strain 129Pt) (Haemophilus somnus).